The primary structure comprises 527 residues: UDP-glucuronosyltransferase 2A3 (527 aa).

A signal peptide spans 1–23 (MRSEKSALVFLLLQLFCVGCGFC). Over 24–486 (GKVLVWPCDM…AAHNLTWFQH (463 aa)) the chain is Extracellular. N-linked (GlcNAc...) asparagine glycosylation is present at asparagine 313. A helical membrane pass occupies residues 487–507 (YSIDVIGFLLACVATAIFLFT). Residues 508 to 523 (KCCLFSCQKFNKTRKI) lie on the Cytoplasmic side of the membrane.

Belongs to the UDP-glycosyltransferase family.

It localises to the membrane. The catalysed reaction is glucuronate acceptor + UDP-alpha-D-glucuronate = acceptor beta-D-glucuronoside + UDP + H(+). In terms of biological role, UDP-glucuronosyltransferases catalyze phase II biotransformation reactions in which lipophilic substrates are conjugated with glucuronic acid to increase water solubility and enhance excretion. They are of major importance in the conjugation and subsequent elimination of potentially toxic xenobiotics and endogenous compounds. This Pongo abelii (Sumatran orangutan) protein is UDP-glucuronosyltransferase 2A3 (UGT2A3).